The primary structure comprises 469 residues: DNA polymerase delta subunit 2 (469 aa).

Met1 bears the N-acetylmethionine mark. Ser257 bears the Phosphoserine mark.

The protein belongs to the DNA polymerase delta/II small subunit family. Component of both the DNA polymerase delta and DNA polymerase zeta complexes. Component of the tetrameric DNA polymerase delta complex (Pol-delta4), which consists of POLD1/p125, POLD2/p50, POLD3/p66/p68 and POLD4/p12, with POLD1 bearing DNA polymerase and 3' to 5' proofreading exonuclease activities. Within Pol-delta4, directly interacts with POLD1, POLD3 and POLD4. Following stress caused by DNA damaging agents or by replication stress, POLD4 is degraded and Pol-delta4 is converted into a trimeric form of the complex (Pol-delta3), which consists of POLD1, POLD2 and POLD3. Pol-delta3 is the major form occurring at S phase replication sites, as well as DNA damage sites. Also observed as a dimeric complex with POLD2 (Pol-delta2 complex). Pol-delta2 is relatively insensitive to the PCNA stimulation (2-5-fold) compared to Pol-delta4 that is stimulated by over 50-fold. Contrary to the other components of Pol-delta4, does not directly interact with PCNA. As POLD1 and POLD4, directly interacts with WRNIP1; this interaction stimulates DNA polymerase delta-mediated DNA synthesis, independently of the presence of PCNA. This stimulation may be due predominantly to an increase of initiation frequency and also to increased processivity. Directly interacts with POLDIP2 and POLDIP3. Directly interacts with KCTD13/PDIP1; in the presence of PCNA, this interaction may stimulate DNA polymerase activity. Component of the tetrameric Pol-zeta complex (Pol-zeta4), which consists of REV3L, MAD2L2, POLD2 and POLD3, with REV3L bearing DNA polymerase catalytic activity. Interacts with KCTD10.

The protein localises to the nucleus. Functionally, accessory component of both the DNA polymerase delta complex and the DNA polymerase zeta complex. As a component of the trimeric and tetrameric DNA polymerase delta complexes (Pol-delta3 and Pol-delta4, respectively), plays a role in high fidelity genome replication, including in lagging strand synthesis, and repair. Pol-delta3 and Pol-delta4 are characterized by the absence or the presence of POLD4. They exhibit differences in catalytic activity. Most notably, Pol-delta3 shows higher proofreading activity than Pol-delta4. Although both Pol-delta3 and Pol-delta4 process Okazaki fragments in vitro, Pol-delta3 may also be better suited to fulfill this task, exhibiting near-absence of strand displacement activity compared to Pol-delta4 and stalling on encounter with the 5'-blocking oligonucleotides. Pol-delta3 idling process may avoid the formation of a gap, while maintaining a nick that can be readily ligated. Along with DNA polymerase kappa, DNA polymerase delta carries out approximately half of nucleotide excision repair (NER) synthesis following UV irradiation. Under conditions of DNA replication stress, required for the repair of broken replication forks through break-induced replication (BIR). Involved in the translesion synthesis (TLS) of templates carrying O6-methylguanine or abasic sites performed by Pol-delta4, independently of DNA polymerase zeta (REV3L) or eta (POLH). Facilitates abasic site bypass by DNA polymerase delta by promoting extension from the nucleotide inserted opposite the lesion. Also involved in TLS as a component of the DNA polymerase zeta complex. Along with POLD3, dramatically increases the efficiency and processivity of DNA synthesis of the DNA polymerase zeta complex compared to the minimal zeta complex, consisting of only REV3L and REV7. The chain is DNA polymerase delta subunit 2 (Pold2) from Mus musculus (Mouse).